The following is a 273-amino-acid chain: Shikimate dehydrogenase (NADP(+)) (273 aa).

Shikimate contacts are provided by residues 15–17 (SKS) and Thr-62. The active-site Proton acceptor is Lys-66. Asp-78 serves as a coordination point for NADP(+). Asn-87 and Asp-103 together coordinate shikimate. Residues 127-131 (GAGGA), 150-155 (NRTHTR), Ala-218, and Gly-238 each bind NADP(+).

It belongs to the shikimate dehydrogenase family. In terms of assembly, homodimer.

It catalyses the reaction shikimate + NADP(+) = 3-dehydroshikimate + NADPH + H(+). It functions in the pathway metabolic intermediate biosynthesis; chorismate biosynthesis; chorismate from D-erythrose 4-phosphate and phosphoenolpyruvate: step 4/7. Functionally, involved in the biosynthesis of the chorismate, which leads to the biosynthesis of aromatic amino acids. Catalyzes the reversible NADPH linked reduction of 3-dehydroshikimate (DHSA) to yield shikimate (SA). The sequence is that of Shikimate dehydrogenase (NADP(+)) from Yersinia pseudotuberculosis serotype O:1b (strain IP 31758).